Reading from the N-terminus, the 673-residue chain is RAS guanyl-releasing protein 4 (673 aa).

Basic residues-rich tracts occupy residues 1-10 (MNRKDSKRKS) and 20-32 (GRGRPRQARRHKT). 2 disordered regions span residues 1 to 34 (MNRKDSKRKSHQECPVKTGGRGRPRQARRHKTCP) and 162 to 188 (QSLGDFSSRLSPGGPGPPHPMSSPGLG). The N-terminal Ras-GEF domain occupies 49-172 (GMLNEGGCSE…SLGDFSSRLS (124 aa)). The Ras-GEF domain maps to 201–432 (ETGELAEHLT…YELSYAREPR (232 aa)). An EF-hand domain is found at 466–501 (HVEQLVESVFKNYDPDGRGTISQEDFERLSGNFPFA). Residues 540-590 (LHTFQEVTFRKPTFCNSCSGFLWGVTKQGYRCRDCGLCCHRHCRDQVKVEC) form a Phorbol-ester/DAG-type zinc finger. 2 disordered regions span residues 593 to 618 (RPGAKGDASPPEAPVPPTPVPQASCG) and 638 to 673 (RHAWTQTESPHPSWEPETVPLPAKASPPTESSKLNS). Residues 603 to 612 (PEAPVPPTPV) show a composition bias toward pro residues.

Belongs to the RASGRP family.

The protein resides in the cytoplasm. Its subcellular location is the cell membrane. In terms of biological role, functions as a cation- and diacylglycerol (DAG)-regulated nucleotide exchange factor activating Ras through the exchange of bound GDP for GTP. In neutrophils, participates in a phospholipase C-activating N-formyl peptide-activated GPCR (G protein-coupled receptor) signaling pathway by promoting Ras-mediated activation of PIK3CG/PI3Kgamma to promote neutrophil functional responses. In CD117(+) dendritic cells and mast cells, participates in an lipopolysaccharide (LPS)-activated signaling pathway that stimulates the production of interferon-gamma and other pro-inflammatory cytokines by natural killer (NK) cells. May function in mast cell differentiation. Does not appear to be required for the development of B-cells, DC-cells, T-cells, or NK-cells. The protein is RAS guanyl-releasing protein 4 (RASGRP4) of Bos taurus (Bovine).